The sequence spans 187 residues: UPF0340 protein SPN23F05980 (187 aa).

The protein belongs to the UPF0340 family.

This chain is UPF0340 protein SPN23F05980, found in Streptococcus pneumoniae (strain ATCC 700669 / Spain 23F-1).